Consider the following 125-residue polypeptide: Phosphoribosyl-AMP cyclohydrolase (125 aa).

Residue D91 participates in Mg(2+) binding. Zn(2+) is bound at residue C92. Mg(2+)-binding residues include D93 and D95. Residues C108 and C115 each coordinate Zn(2+).

This sequence belongs to the PRA-CH family. As to quaternary structure, homodimer. Mg(2+) is required as a cofactor. The cofactor is Zn(2+).

It localises to the cytoplasm. The catalysed reaction is 1-(5-phospho-beta-D-ribosyl)-5'-AMP + H2O = 1-(5-phospho-beta-D-ribosyl)-5-[(5-phospho-beta-D-ribosylamino)methylideneamino]imidazole-4-carboxamide. It functions in the pathway amino-acid biosynthesis; L-histidine biosynthesis; L-histidine from 5-phospho-alpha-D-ribose 1-diphosphate: step 3/9. Functionally, catalyzes the hydrolysis of the adenine ring of phosphoribosyl-AMP. This chain is Phosphoribosyl-AMP cyclohydrolase, found in Streptomyces griseus subsp. griseus (strain JCM 4626 / CBS 651.72 / NBRC 13350 / KCC S-0626 / ISP 5235).